Reading from the N-terminus, the 156-residue chain is Small ribosomal subunit protein uS7cz/uS7cy (156 aa).

The protein belongs to the universal ribosomal protein uS7 family. As to quaternary structure, part of the 30S ribosomal subunit.

The protein resides in the plastid. It is found in the chloroplast. In terms of biological role, one of the primary rRNA binding proteins, it binds directly to 16S rRNA where it nucleates assembly of the head domain of the 30S subunit. This is Small ribosomal subunit protein uS7cz/uS7cy (rps7-A) from Triticum aestivum (Wheat).